We begin with the raw amino-acid sequence, 385 residues long: S-adenosylmethionine synthase (385 aa).

Residue H16 coordinates ATP. D18 serves as a coordination point for Mg(2+). Position 44 (E44) interacts with K(+). Residues E57 and Q100 each coordinate L-methionine. A flexible loop region spans residues Q100–K110. ATP is bound by residues D165–K167, R231–F232, D240, R246–K247, A263, and K267. D240 lines the L-methionine pocket. K271 contributes to the L-methionine binding site.

This sequence belongs to the AdoMet synthase family. In terms of assembly, homotetramer; dimer of dimers. The cofactor is Mg(2+). K(+) serves as cofactor.

The protein resides in the cytoplasm. The catalysed reaction is L-methionine + ATP + H2O = S-adenosyl-L-methionine + phosphate + diphosphate. It participates in amino-acid biosynthesis; S-adenosyl-L-methionine biosynthesis; S-adenosyl-L-methionine from L-methionine: step 1/1. Functionally, catalyzes the formation of S-adenosylmethionine (AdoMet) from methionine and ATP. The overall synthetic reaction is composed of two sequential steps, AdoMet formation and the subsequent tripolyphosphate hydrolysis which occurs prior to release of AdoMet from the enzyme. The chain is S-adenosylmethionine synthase from Vibrio cholerae serotype O1 (strain ATCC 39315 / El Tor Inaba N16961).